Here is a 143-residue protein sequence, read N- to C-terminus: Nucleoside diphosphate kinase (143 aa).

K11, F59, R87, T93, R104, and N114 together coordinate ATP. H117 acts as the Pros-phosphohistidine intermediate in catalysis.

It belongs to the NDK family. In terms of assembly, homotetramer. It depends on Mg(2+) as a cofactor.

The protein localises to the cytoplasm. The catalysed reaction is a 2'-deoxyribonucleoside 5'-diphosphate + ATP = a 2'-deoxyribonucleoside 5'-triphosphate + ADP. The enzyme catalyses a ribonucleoside 5'-diphosphate + ATP = a ribonucleoside 5'-triphosphate + ADP. In terms of biological role, major role in the synthesis of nucleoside triphosphates other than ATP. The ATP gamma phosphate is transferred to the NDP beta phosphate via a ping-pong mechanism, using a phosphorylated active-site intermediate. The sequence is that of Nucleoside diphosphate kinase from Escherichia coli O7:K1 (strain IAI39 / ExPEC).